The chain runs to 212 residues: Ropporin-1B (212 aa).

The region spanning 12-49 (PELPKMLKEFAKAAIRAQPQDLIQWGADYFEALSRGET) is the RIIa domain. Serine 56 carries the phosphoserine modification. The interval 209 to 212 (VWLE) is interaction with RHPN1.

This sequence belongs to the ropporin family. In terms of assembly, homodimer. Interacts with RHPN1. May interact with SPA17. Interacts with AKAP3. Interacts with FSCB; the interaction increases upon spermatozoa capacitation conditions. Post-translationally, sumoylated, sumoylation decreases upon spermatozoa capacitation conditions.

It localises to the cell projection. The protein localises to the cilium. It is found in the flagellum. Important for male fertility. With ROPN1L, involved in fibrous sheath integrity and sperm motility, plays a role in PKA-dependent signaling processes required for spermatozoa capacitation. The sequence is that of Ropporin-1B (ROPN1B) from Homo sapiens (Human).